The sequence spans 545 residues: CTP synthase (545 aa).

The segment at 1-266 is amidoligase domain; the sequence is MATNYIFVTG…DDIVTKRFNL (266 aa). S14 is a CTP binding site. UTP is bound at residue S14. Residues 15 to 20 and D72 each bind ATP; that span reads SLGKGI. Mg(2+) contacts are provided by D72 and E140. Residues 147–149, 187–192, and K223 each bind CTP; these read DIE and KTKPTQ. UTP contacts are provided by residues 187–192 and K223; that span reads KTKPTQ. An ATP-binding site is contributed by 239 to 241; the sequence is RDV. The region spanning 291–542 is the Glutamine amidotransferase type-1 domain; sequence TVGFVGKYVE…IEAAGEFHKE (252 aa). G352 is a binding site for L-glutamine. The active-site Nucleophile; for glutamine hydrolysis is the C379. Residues 380-383, E403, and R470 contribute to the L-glutamine site; that span reads LGMQ. Residues H515 and E517 contribute to the active site.

The protein belongs to the CTP synthase family. Homotetramer.

The enzyme catalyses UTP + L-glutamine + ATP + H2O = CTP + L-glutamate + ADP + phosphate + 2 H(+). It carries out the reaction L-glutamine + H2O = L-glutamate + NH4(+). The catalysed reaction is UTP + NH4(+) + ATP = CTP + ADP + phosphate + 2 H(+). It participates in pyrimidine metabolism; CTP biosynthesis via de novo pathway; CTP from UDP: step 2/2. Allosterically activated by GTP, when glutamine is the substrate; GTP has no effect on the reaction when ammonia is the substrate. The allosteric effector GTP functions by stabilizing the protein conformation that binds the tetrahedral intermediate(s) formed during glutamine hydrolysis. Inhibited by the product CTP, via allosteric rather than competitive inhibition. Catalyzes the ATP-dependent amination of UTP to CTP with either L-glutamine or ammonia as the source of nitrogen. Regulates intracellular CTP levels through interactions with the four ribonucleotide triphosphates. The polypeptide is CTP synthase (Idiomarina loihiensis (strain ATCC BAA-735 / DSM 15497 / L2-TR)).